The chain runs to 390 residues: Anhydro-N-acetylmuramic acid kinase (390 aa).

ATP is bound at residue 9 to 16 (GTSLDGID).

The protein belongs to the anhydro-N-acetylmuramic acid kinase family.

It carries out the reaction 1,6-anhydro-N-acetyl-beta-muramate + ATP + H2O = N-acetyl-D-muramate 6-phosphate + ADP + H(+). Its pathway is amino-sugar metabolism; 1,6-anhydro-N-acetylmuramate degradation. It participates in cell wall biogenesis; peptidoglycan recycling. Its function is as follows. Catalyzes the specific phosphorylation of 1,6-anhydro-N-acetylmuramic acid (anhMurNAc) with the simultaneous cleavage of the 1,6-anhydro ring, generating MurNAc-6-P. Is required for the utilization of anhMurNAc either imported from the medium or derived from its own cell wall murein, and thus plays a role in cell wall recycling. The protein is Anhydro-N-acetylmuramic acid kinase of Bacillus cereus (strain ATCC 14579 / DSM 31 / CCUG 7414 / JCM 2152 / NBRC 15305 / NCIMB 9373 / NCTC 2599 / NRRL B-3711).